The following is a 393-amino-acid chain: 1-deoxy-D-xylulose 5-phosphate reductoisomerase (393 aa).

Positions 10, 11, 12, 13, 37, 38, and 124 each coordinate NADPH. Residue Lys125 coordinates 1-deoxy-D-xylulose 5-phosphate. NADPH is bound at residue Glu126. Asp150 provides a ligand contact to Mn(2+). Ser151, Glu152, Ser179, and His202 together coordinate 1-deoxy-D-xylulose 5-phosphate. Position 152 (Glu152) interacts with Mn(2+). Gly208 is a binding site for NADPH. Ser215, Asn220, Lys221, and Glu224 together coordinate 1-deoxy-D-xylulose 5-phosphate. Glu224 contributes to the Mn(2+) binding site.

It belongs to the DXR family. Requires Mg(2+) as cofactor. Mn(2+) serves as cofactor.

It carries out the reaction 2-C-methyl-D-erythritol 4-phosphate + NADP(+) = 1-deoxy-D-xylulose 5-phosphate + NADPH + H(+). It participates in isoprenoid biosynthesis; isopentenyl diphosphate biosynthesis via DXP pathway; isopentenyl diphosphate from 1-deoxy-D-xylulose 5-phosphate: step 1/6. In terms of biological role, catalyzes the NADPH-dependent rearrangement and reduction of 1-deoxy-D-xylulose-5-phosphate (DXP) to 2-C-methyl-D-erythritol 4-phosphate (MEP). The sequence is that of 1-deoxy-D-xylulose 5-phosphate reductoisomerase from Cupriavidus necator (strain ATCC 17699 / DSM 428 / KCTC 22496 / NCIMB 10442 / H16 / Stanier 337) (Ralstonia eutropha).